Consider the following 201-residue polypeptide: Protein GrpE (201 aa).

It belongs to the GrpE family. As to quaternary structure, homodimer.

The protein resides in the cytoplasm. In terms of biological role, participates actively in the response to hyperosmotic and heat shock by preventing the aggregation of stress-denatured proteins, in association with DnaK and GrpE. It is the nucleotide exchange factor for DnaK and may function as a thermosensor. Unfolded proteins bind initially to DnaJ; upon interaction with the DnaJ-bound protein, DnaK hydrolyzes its bound ATP, resulting in the formation of a stable complex. GrpE releases ADP from DnaK; ATP binding to DnaK triggers the release of the substrate protein, thus completing the reaction cycle. Several rounds of ATP-dependent interactions between DnaJ, DnaK and GrpE are required for fully efficient folding. The protein is Protein GrpE of Shewanella denitrificans (strain OS217 / ATCC BAA-1090 / DSM 15013).